The chain runs to 214 residues: Probable nicotinate-nucleotide adenylyltransferase (214 aa).

This sequence belongs to the NadD family.

The catalysed reaction is nicotinate beta-D-ribonucleotide + ATP + H(+) = deamido-NAD(+) + diphosphate. Its pathway is cofactor biosynthesis; NAD(+) biosynthesis; deamido-NAD(+) from nicotinate D-ribonucleotide: step 1/1. Functionally, catalyzes the reversible adenylation of nicotinate mononucleotide (NaMN) to nicotinic acid adenine dinucleotide (NaAD). This Pseudomonas aeruginosa (strain UCBPP-PA14) protein is Probable nicotinate-nucleotide adenylyltransferase.